The chain runs to 853 residues: MKADQKHTPMMQQYLKLKAENPEILLFYRMGDFYELFYDDAKKASQLLDISLTKRGSSNGEPIPMAGVPYHAVEGYLAKLVQLGESVAICEQIGNPATSKGPVERAVVRIVTPGTVTDEALLSERIDNLIASIYHHNGKFGYATLDITSGRFQLCEPETEEAMAAELQRTSPRELLFPEDFEPVNLMASRNGNRRRPVWEFELDTAKQQLNKQFGTRDLVGFGVEGAKLGLCAAGCLIQYVKDTQRTALPHIRSLTMDKQDHSVILDAATRRNLEITQNLGGGTDNTLAEVLDHTATAMGSRMLKRWLHQPMRNISALDQRLDAIGEMKDLALFTELQPTLKQIGDIERILARLALRSARPRDMARLRQAMEYLPELAETLTQLKHPYLTQLAQYASPVDEVSELLERAIKENPPVVIRDGGVIAEGYNAELDEWRDLAAGATEFLDKLEQEERERHGIDTLKVGYNNVHGFFIQVSRGQSHLVPPHYVRRQTLKNAERYIIPELKEHEDKVLSSKSKALAIEKKLWDELFDLLLPYLERLQNIASSVSQLDVLQNLAERADTLDYCRPTMTESAGVQIQAGRHPVVEQVMDEPFIANPIDLNDQRKMLIITGPNMGGKSTYMRQTALIALMAHIGCYVPAESATIGSIDRIFTRIGASDDLASGRSTFMVEMTETANILHNATPNSLVLMDEIGRGTSTYDGLSLAWASAEWLANQINAMTLFATHYFELTELPNQIPTLANVHLDAVEHGDSIAFMHAVQEGAASKSYGLAVAGLAGVPKAVIKNARAKLTQLEALSIDSPTSKPSGVDIANQLSLIPEPSEVEQALANVDPDDLTPRQALEELYRLKKLL.

613-620 is a binding site for ATP; it reads GPNMGGKS.

Belongs to the DNA mismatch repair MutS family.

Functionally, this protein is involved in the repair of mismatches in DNA. It is possible that it carries out the mismatch recognition step. This protein has a weak ATPase activity. This Vibrio atlanticus (strain LGP32) (Vibrio splendidus (strain Mel32)) protein is DNA mismatch repair protein MutS.